Consider the following 478-residue polypeptide: UDP-N-acetylmuramate--L-alanine ligase (478 aa).

ATP is bound at residue 122-128 (GTHGKTT).

The protein belongs to the MurCDEF family.

Its subcellular location is the cytoplasm. It carries out the reaction UDP-N-acetyl-alpha-D-muramate + L-alanine + ATP = UDP-N-acetyl-alpha-D-muramoyl-L-alanine + ADP + phosphate + H(+). Its pathway is cell wall biogenesis; peptidoglycan biosynthesis. Cell wall formation. In Stenotrophomonas maltophilia (strain R551-3), this protein is UDP-N-acetylmuramate--L-alanine ligase.